Reading from the N-terminus, the 128-residue chain is Lymphocyte antigen 6 complex locus protein G5c (128 aa).

The first 29 residues, 1 to 29 (MGAEYGCLPSTSQALYVILLIVLVRMSLV), serve as a signal peptide directing secretion. Positions 37 to 128 (LRCYRCLLET…NPQNRVFYIP (92 aa)) constitute a UPAR/Ly6 domain. Intrachain disulfides connect cysteine 39–cysteine 66, cysteine 42–cysteine 51, cysteine 58–cysteine 85, cysteine 94–cysteine 111, and cysteine 112–cysteine 117. A glycan (N-linked (GlcNAc...) asparagine) is linked at asparagine 73.

In terms of assembly, forms oligomers. Post-translationally, N-glycosylated. As to expression, abundantly expressed in the epididymis.

The protein localises to the secreted. Its function is as follows. May have a role in hematopoietic cell differentiation. The chain is Lymphocyte antigen 6 complex locus protein G5c (LY6G5C) from Canis lupus familiaris (Dog).